Reading from the N-terminus, the 312-residue chain is Ribosomal RNA small subunit methyltransferase H (312 aa).

S-adenosyl-L-methionine-binding positions include 35 to 37 (GGH), D55, F79, D101, and Q108.

The protein belongs to the methyltransferase superfamily. RsmH family.

Its subcellular location is the cytoplasm. It catalyses the reaction cytidine(1402) in 16S rRNA + S-adenosyl-L-methionine = N(4)-methylcytidine(1402) in 16S rRNA + S-adenosyl-L-homocysteine + H(+). In terms of biological role, specifically methylates the N4 position of cytidine in position 1402 (C1402) of 16S rRNA. The protein is Ribosomal RNA small subunit methyltransferase H of Glaesserella parasuis serovar 5 (strain SH0165) (Haemophilus parasuis).